The following is a 242-amino-acid chain: Small ribosomal subunit protein uS2 (242 aa).

This sequence belongs to the universal ribosomal protein uS2 family.

In Vibrio vulnificus (strain CMCP6), this protein is Small ribosomal subunit protein uS2.